Consider the following 112-residue polypeptide: UPF0102 protein Pmob_0702 (112 aa).

Belongs to the UPF0102 family.

The chain is UPF0102 protein Pmob_0702 from Petrotoga mobilis (strain DSM 10674 / SJ95).